Consider the following 108-residue polypeptide: UPF0060 membrane protein Mflv_3127 (108 aa).

A run of 4 helical transmembrane segments spans residues 7-27, 32-52, 61-81, and 87-107; these read LLFV…WQGF, GWLW…VAAF, VLAA…MVAD, and RWDI…MYAP.

The protein belongs to the UPF0060 family.

The protein resides in the cell membrane. This is UPF0060 membrane protein Mflv_3127 from Mycolicibacterium gilvum (strain PYR-GCK) (Mycobacterium gilvum (strain PYR-GCK)).